A 723-amino-acid chain; its full sequence is Methionine--tRNA ligase (723 aa).

The short motif at 12-22 (PYANGDIHLGH) is the 'HIGH' region element. Zn(2+)-binding residues include cysteine 143, cysteine 146, cysteine 156, and cysteine 159. The 'KMSKS' region signature appears at 345-349 (KMSKS). Lysine 348 serves as a coordination point for ATP. The interval 568-604 (PAAATAPAKDAKPAKEAGSQQRHAEKQQHAAGVSETA) is disordered. One can recognise a tRNA-binding domain in the interval 612-723 (DFTKVDLRIA…EGAQAGMRVK (112 aa)).

This sequence belongs to the class-I aminoacyl-tRNA synthetase family. MetG type 1 subfamily. In terms of assembly, homodimer. The cofactor is Zn(2+).

Its subcellular location is the cytoplasm. It carries out the reaction tRNA(Met) + L-methionine + ATP = L-methionyl-tRNA(Met) + AMP + diphosphate. Is required not only for elongation of protein synthesis but also for the initiation of all mRNA translation through initiator tRNA(fMet) aminoacylation. The protein is Methionine--tRNA ligase of Azoarcus sp. (strain BH72).